Reading from the N-terminus, the 326-residue chain is D-amino-acid oxidase (326 aa).

Positions 18, 19, 46, 47, 48, 52, 53, 162, and 179 each coordinate FAD. Tyr222 and Arg277 together coordinate D-proline. Tyr222 and Arg277 together coordinate D-serine. The FAD site is built by Arg277, Gly303, Gly304, Gly306, and Thr308. Gly304 is a D-proline binding site. Gly304 provides a ligand contact to D-serine.

The protein belongs to the DAMOX/DASOX family. In terms of assembly, monomer. Requires FAD as cofactor.

Its subcellular location is the cytoplasm. It is found in the secreted. The protein localises to the cell wall. The enzyme catalyses a D-alpha-amino acid + O2 + H2O = a 2-oxocarboxylate + H2O2 + NH4(+). It catalyses the reaction D-valine + O2 + H2O = 3-methyl-2-oxobutanoate + H2O2 + NH4(+). The catalysed reaction is D-leucine + O2 + H2O = 4-methyl-2-oxopentanoate + H2O2 + NH4(+). It carries out the reaction D-isoleucine + O2 + H2O = (R)-3-methyl-2-oxopentanoate + H2O2 + NH4(+). The enzyme catalyses D-tyrosine + O2 + H2O = 3-(4-hydroxyphenyl)pyruvate + H2O2 + NH4(+). It catalyses the reaction D-threonine + O2 + H2O = (S)-3-hydroxy-2-oxobutanoate + H2O2 + NH4(+). Its activity is regulated as follows. Inhibited by benzoate and phenylmethylsulfonyl fluoride (PMSF). Weakly inhibited by anthranilate, crotonate, and the amino acid-modifying agents dithionitrobenzoic acid and diethyl pyrocarbonate. Not inhibited by malonate, meso-tartrate, D-malate, or the amino acid-modifying agents iodoacetic acid or butane-2,3-dione. Catalyzes the oxidative deamination of D-amino acids with broad substrate specificity. The polypeptide is D-amino-acid oxidase (Rubrobacter xylanophilus (strain DSM 9941 / JCM 11954 / NBRC 16129 / PRD-1)).